We begin with the raw amino-acid sequence, 142 residues long: Transcription antitermination protein NusB (142 aa).

It belongs to the NusB family.

Functionally, involved in transcription antitermination. Required for transcription of ribosomal RNA (rRNA) genes. Binds specifically to the boxA antiterminator sequence of the ribosomal RNA (rrn) operons. This Borrelia garinii subsp. bavariensis (strain ATCC BAA-2496 / DSM 23469 / PBi) (Borreliella bavariensis) protein is Transcription antitermination protein NusB.